The sequence spans 289 residues: Acetyl-coenzyme A carboxylase carboxyl transferase subunit beta (289 aa).

In terms of domain architecture, CoA carboxyltransferase N-terminal spans 36 to 289 (MWLRCPHCHQ…LLKTGSVANE (254 aa)). C40, C43, C58, and C61 together coordinate Zn(2+). The C4-type zinc finger occupies 40-61 (CPHCHQLLFAKQLTQYAVCPNC).

This sequence belongs to the AccD/PCCB family. Acetyl-CoA carboxylase is a heterohexamer composed of biotin carboxyl carrier protein (AccB), biotin carboxylase (AccC) and two subunits each of ACCase subunit alpha (AccA) and ACCase subunit beta (AccD). Requires Zn(2+) as cofactor.

It is found in the cytoplasm. The catalysed reaction is N(6)-carboxybiotinyl-L-lysyl-[protein] + acetyl-CoA = N(6)-biotinyl-L-lysyl-[protein] + malonyl-CoA. Its pathway is lipid metabolism; malonyl-CoA biosynthesis; malonyl-CoA from acetyl-CoA: step 1/1. Its function is as follows. Component of the acetyl coenzyme A carboxylase (ACC) complex. Biotin carboxylase (BC) catalyzes the carboxylation of biotin on its carrier protein (BCCP) and then the CO(2) group is transferred by the transcarboxylase to acetyl-CoA to form malonyl-CoA. The polypeptide is Acetyl-coenzyme A carboxylase carboxyl transferase subunit beta (Limosilactobacillus reuteri subsp. reuteri (strain JCM 1112) (Lactobacillus reuteri)).